Here is a 782-residue protein sequence, read N- to C-terminus: General transcription and DNA repair factor IIH helicase/translocase subunit XPB (782 aa).

The segment covering 1-11 (MGKRDRVDRDK) has biased composition (basic and acidic residues). The tract at residues 1–52 (MGKRDRVDRDKKKSKKRQYEEEEEDEDDAPGNESQEAVPSAAGKQVDESSTK) is disordered. The Nuclear localization signal motif lies at 6–18 (RVDRDKKKSKKRQ). Residues 20-30 (EEEEEDEDDAP) show a composition bias toward acidic residues. Ser-34 is modified (phosphoserine). Positions 328-489 (FGNGRARSGV…LNFLIGPKLY (162 aa)) constitute a Helicase ATP-binding domain. 341–348 (PCGAGKSL) serves as a coordination point for ATP. The DEVH box motif lies at 442 to 445 (EVHT). The region spanning 543–703 (ACQFLIKFHE…AGMEEEELAF (161 aa)) is the Helicase C-terminal domain. Ser-686 bears the Phosphoserine mark. The residue at position 751 (Ser-751) is a Phosphoserine; by CK2.

Belongs to the helicase family. RAD25/XPB subfamily. In terms of assembly, component of the 7-subunit TFIIH core complex composed of XPB/ERCC3, XPD/ERCC2, GTF2H1, GTF2H2, GTF2H3, GTF2H4 and GTF2H5, which is active in NER. The core complex associates with the 3-subunit CDK-activating kinase (CAK) module composed of CCNH/cyclin H, CDK7 and MNAT1 to form the 10-subunit holoenzyme (holo-TFIIH) active in transcription. Interacts with PUF60. Interacts with ATF7IP. Interacts with KAT2A; leading to KAT2A recruitment to promoters and acetylation of histones. Part of TBP-based Pol II pre-initiation complex (PIC), in which Pol II core assembles with general transcription factors and other specific initiation factors including GTF2E1, GTF2E2, GTF2F1, GTF2F2, TCEA1, ERCC2, ERCC3, GTF2H2, GTF2H3, GTF2H4, GTF2H5, GTF2A1, GTF2A2, GTF2B and TBP; this large multi-subunit PIC complex mediates DNA unwinding and targets Pol II core to the transcription start site where the first phosphodiester bond forms. In terms of processing, phosphorylation on Ser-751 by CK2 controls the 5'-excision activity of ERCC1-XPF endonuclease; phosphorylated protein inhibits the excision activity and thus NER. Dephosphorylation reactivates the 5'-excision step. Phosphorylation has no effect on transcription or the 3'-5' helicase activity.

Its subcellular location is the nucleus. The enzyme catalyses Couples ATP hydrolysis with the unwinding of duplex DNA by translocating in the 3'-5' direction.. It carries out the reaction ATP + H2O = ADP + phosphate + H(+). With respect to regulation, phosphorylation on Ser-751 by CK2 controls the 5'-excision activity of ERCC1-XPF endonuclease; phosphorylated protein inhibits the excision activity and thus NER. ATPase activity is stimulated by TFIIH subunit p52 (GTF2H4). DNA translocase activity by this subunit in TFIIH is stimulated by XPA, ERCC5/XPG and XFP plus ERCC1. Its function is as follows. ATP-dependent 3'-5' DNA helicase/translocase; binds dsDNA rather than ssDNA, unzipping it in a translocase rather than classical helicase activity. Component of the general transcription and DNA repair factor IIH (TFIIH) core complex. When complexed to CDK-activating kinase (CAK), involved in RNA transcription by RNA polymerase II. The ATPase activity of XPB/ERCC3, but not its helicase activity, is required for DNA opening; it may wrap around the damaged DNA wedging it open, causing localized melting and twisting that allows XPD/ERCC2 helicase to anchor. The ATP-dependent helicase activity of XPB/ERCC3 may be required for promoter escape. Also involved in transcription-coupled nucleotide excision repair (NER) of damaged DNA. In NER, TFIIH acts by opening DNA around the lesion to allow the excision of the damaged oligonucleotide and its replacement by a new DNA fragment. The structure of the TFIIH transcription complex differs from the NER-TFIIH complex; large movements by XPD/ERCC2 and XPB/ERCC3 are stabilized by XPA. The protein is General transcription and DNA repair factor IIH helicase/translocase subunit XPB (Ercc3) of Rattus norvegicus (Rat).